Reading from the N-terminus, the 109-residue chain is uncharacterized protein (109 aa).

Residues 27 to 89 (KEEAHQFRDK…LKRIDELIAV (63 aa)) are a coiled coil.

This is an uncharacterized protein from Streptococcus pneumoniae.